The primary structure comprises 685 residues: MSGPHRSFSFNQGDDGAGDAGDVSPIRSQEGHFMNSPPRHNDVSPVSARSQAMGSSPSSGFLSAHEHGDRGWGQNSGHTQAMRTNSTTPGMDNLGPAAVGGGISGIALGVANSHNRQSGIDAFRDTDGRNLPAERGYNTTGSDNPYVPTPPGGGSHGSAENLRPRDSYGSNVALGAAAAPAGQLTPGGSNPSQRSLFDSPYQGVGAMDAGPYQRQSAYSAAGDYPLVINPDEIADDGDDGFTPVPNGKSASSNARAIPAAAAGGAAGGGLFGLFKSKKADNPSYGPVPGAGLEAGEKSRWVKPTPGGGSRKRGWIVGLALAFIVVGAIVGGAVGGTLGNRENEAPDTTKSASSDTESNGDLNKDSSEIKDLMNNPDLHKVFPGMDYTPWGVQYPLCLKYPPSQNNVTRDVAVLSQLTNTVRLYGTDCNQTEMVLHAIDRLELKDMKVWLGVWIDSNDTTNDRQIKQLYKVLDDTKDISIFKGAIVGNEALYRAGNDIASAKKKLISYMDDVRNHFKEKNYDLPIATSDLGDNWKEDLVTATDLVMSNVHPFFAGVTAKEAAGWTWNFWNQNDVPLTKGTNKKQVISEVGWPSGGGNDCGSNNKCTDDTSGSVAGIDEMNQFMSDWICQALENGTDYFWFEAFDEPWKVQYNTKDENWEDKWGLMDAARKLKPGLKIPDCGGKTAA.

Disordered stretches follow at residues 1–96, 119–168, and 180–202; these read MSGP…NLGP, GIDA…RDSY, and PAGQ…SPYQ. Over 1 to 312 the chain is Cytoplasmic; it reads MSGPHRSFSF…PTPGGGSRKR (312 aa). Composition is skewed to polar residues over residues 47–61 and 73–90; these read SARS…SSGF and GQNS…TTPG. The helical; Signal-anchor for type II membrane protein transmembrane segment at 313–333 threads the bilayer; that stretch reads GWIVGLALAFIVVGAIVGGAV. Over 334-685 the chain is Extracellular; sequence GGTLGNRENE…IPDCGGKTAA (352 aa). Positions 335–369 are disordered; that stretch reads GTLGNRENEAPDTTKSASSDTESNGDLNKDSSEIK. Residues 345–360 are compositionally biased toward polar residues; the sequence is PDTTKSASSDTESNGD. 3 N-linked (GlcNAc...) asparagine glycosylation sites follow: N405, N428, and N456. Residue E488 is the Proton donor of the active site. E587 (nucleophile) is an active-site residue. The N-linked (GlcNAc...) asparagine glycan is linked to N632.

The protein belongs to the glycosyl hydrolase 17 family.

It is found in the cell membrane. The enzyme catalyses Hydrolysis of (1-&gt;3)-beta-D-glucosidic linkages in (1-&gt;3)-beta-D-glucans.. Its function is as follows. Glucanases play a role in cell expansion during growth, in cell-cell fusion during mating, and in spore release during sporulation. This enzyme may be involved in beta-glucan degradation. Active on laminarin and lichenan. The polypeptide is Probable glucan endo-1,3-beta-glucosidase btgC (btgC) (Aspergillus oryzae (strain ATCC 42149 / RIB 40) (Yellow koji mold)).